Here is a 471-residue protein sequence, read N- to C-terminus: Ubiquitin carboxyl-terminal hydrolase 8 (471 aa).

Residues C4, H6, C46, C49, C60, C63, C68, H73, H77, H83, C96, and C99 each coordinate Zn(2+). Residues 22 to 122 (KTCNAARYIL…ILAKYWDDVC (101 aa)) form a UBP-type; degenerate zinc finger. Positions 137-468 (SGLINMGSTC…QAYLLFYTIR (332 aa)) constitute a USP domain. C146 serves as the catalytic Nucleophile. Residues H170, C174, C182, C185, H250, C271, C273, H276, C289, C292, C336, and C339 each coordinate Zn(2+). H427 serves as the catalytic Proton acceptor.

Belongs to the peptidase C19 family. UBP8 subfamily. As to quaternary structure, component of the 1.8 MDa SAGA (Spt-Ada-Gcn5 acetyltransferase) complex, which is composed of 19 subunits TRA1, SPT7, TAF5, NGG1/ADA3, SGF73, SPT20/ADA5, SPT8, TAF12, TAF6, HFI1/ADA1, UBP8, GCN5, ADA2, SPT3, SGF29, TAF10, TAF9, SGF11 and SUS1. The SAGA complex is composed of 4 modules, namely the HAT (histone acetyltransferase) module (GCN5, ADA2, NGG1/ADA3 and SGF29), the DUB (deubiquitinating) module (UBP8, SGF11, SGF73 and SUS1), the core or TAF (TBP-associated factor) module (TAF5, TAF6, TAF9, TAF10 and TAF12), and the Tra1 or SPT (Suppressor of Ty) module (TRA1, HFI1/ADA1, SPT3, SPT7, SPT8 and SPT20/ADA5). The Tra1/SPT module binds activators, the core module recruits TBP (TATA-binding protein), the HAT module contains the histone H3 acetyltransferase GCN5, and the DUB module comprises the histone H2B deubiquitinase UBP8. Also identified in an altered form of SAGA, named SALSA (SAGA altered, Spt8 absent) or SLIK (SAGA-like) complex, which contains a C-terminal truncated form of SPT7 and is missing SPT8. However, it has been shown that the SAGA and SAGA-like SALSA/SLIK transcriptional coactivators are structurally and biochemically equivalent.

The protein resides in the nucleus. The catalysed reaction is Thiol-dependent hydrolysis of ester, thioester, amide, peptide and isopeptide bonds formed by the C-terminal Gly of ubiquitin (a 76-residue protein attached to proteins as an intracellular targeting signal).. Functionally, histone deubiquitinating enzyme component of the transcription coactivator SAGA complex. SAGA acts as a general cofactor required for essentially all RNA polymerase II transcription. At the promoters, SAGA is required for transcription pre-initiation complex (PIC) recruitment. It influences RNA polymerase II transcriptional activity through different activities such as TBP interaction (via core/TAF module) and promoter selectivity, interaction with transcription activators (via Tra1/SPT module), and chromatin modification through histone acetylation (via HAT module) and deubiquitination (via DUB module). SAGA preferentially acetylates histones H3 (to form H3K9ac, H3K14ac, H3K18ac and H3K23ac) and H2B and deubiquitinates histone H2B. SAGA interacts with DNA via upstream activating sequences (UASs). Also identified in a modified version of SAGA named SALSA or SLIK. The cleavage of SPT7 and the absence of the SPT8 subunit in SLIK neither drive any major conformational differences in its structure compared with SAGA, nor significantly affect HAT, DUB, or DNA-binding activities. Within the DUB module, the correctly positioned zinc finger domains of SGF11 and SGF73 are both required to fully activate the ubiquitin hydrolase UBP8. The DUB module is also linked to the splicing efficiency of many transcripts. This chain is Ubiquitin carboxyl-terminal hydrolase 8 (UBP8), found in Saccharomyces cerevisiae (strain ATCC 204508 / S288c) (Baker's yeast).